The following is a 208-amino-acid chain: N-(5'-phosphoribosyl)anthranilate isomerase (208 aa).

Belongs to the TrpF family.

The enzyme catalyses N-(5-phospho-beta-D-ribosyl)anthranilate = 1-(2-carboxyphenylamino)-1-deoxy-D-ribulose 5-phosphate. It functions in the pathway amino-acid biosynthesis; L-tryptophan biosynthesis; L-tryptophan from chorismate: step 3/5. This Chlamydia trachomatis serovar L2 (strain ATCC VR-902B / DSM 19102 / 434/Bu) protein is N-(5'-phosphoribosyl)anthranilate isomerase.